Here is a 550-residue protein sequence, read N- to C-terminus: Protein UshA (550 aa).

Residues 1–25 (MKLLQRGVALALLTTFTLASETALA) form the signal peptide. Residues Asp-41, His-43, Asp-84, Asn-116, His-217, His-252, and Gln-254 each contribute to the Zn(2+) site. The cysteines at positions 258 and 275 are disulfide-linked. Substrate contacts are provided by residues 375–379 (RDKVR) and 498–504 (FNATGGD).

Belongs to the 5'-nucleotidase family. As to quaternary structure, monomer. Zn(2+) is required as a cofactor.

Its subcellular location is the periplasm. The enzyme catalyses UDP-sugar + H2O = UMP + alpha-D-aldose 1-phosphate.. It catalyses the reaction a ribonucleoside 5'-phosphate + H2O = a ribonucleoside + phosphate. Its activity is regulated as follows. The activity of this protein is inhibited by an intracellular protein inhibitor. Functionally, degradation of external UDP-glucose to uridine monophosphate and glucose-1-phosphate, which can then be used by the cell. In Escherichia coli (strain K12), this protein is Protein UshA (ushA).